The following is a 40-amino-acid chain: Antimicrobial peptide 1 (40 aa).

The Chitin-binding type-1 domain occupies 1-40; that stretch reads AQCGAQGGGATCPGGLCCSQWGWCGSTPKYCGAGCQSNCK. 4 disulfide bridges follow: C3/C18, C12/C24, C17/C31, and C35/C39.

Post-translationally, not glycosylated.

Functionally, antimicrobial peptide active against plant pathogenic fungi and Gram-negative and -positive bacteria. The sequence is that of Antimicrobial peptide 1 from Fagopyrum esculentum (Common buckwheat).